The sequence spans 711 residues: Myb-like protein B (711 aa).

Positions 24–50 (QPQQSIQQQQQQQQQQQQQQQQQQQQQ) are enriched in low complexity. 2 disordered regions span residues 24 to 70 (QPQQ…SPQL) and 113 to 235 (NYHT…IINN). Polar residues-rich tracts occupy residues 113-139 (NYHT…SPPT) and 148-157 (TPLSSSTGFS). Composition is skewed to low complexity over residues 158–187 (NNNN…NNNI) and 198–235 (NNYP…IINN). HTH myb-type domains lie at 428-490 (RESI…SPEI) and 491-542 (KKGS…SRQT). 2 consecutive DNA-binding regions (H-T-H motif) follow at residues 462–486 (WKKI…KRVL) and 514–538 (WKNV…KAIM). The Myb-like domain maps to 540 to 598 (RQTEWNQLEDDILTKKIKLMTQNNEKISFQQVSKHLARAKTTKIPRTALECKSRWSQLN). The tract at residues 598-640 (NSTNVNNNNNNNNNSITTSSSNTNQQQQSTMVTPTSSPLSSPI) is disordered.

It is found in the nucleus. Transcriptional activator that initiates multicellular development by induction of adenylyl cyclase expression. The protein is Myb-like protein B (mybB) of Dictyostelium discoideum (Social amoeba).